We begin with the raw amino-acid sequence, 737 residues long: Polyribonucleotide nucleotidyltransferase (737 aa).

2 residues coordinate Mg(2+): aspartate 489 and aspartate 495. In terms of domain architecture, KH spans 556–615 (PKIDTIKIDVDKIKIVIGKGGETIDKIIAETGVKIDIDEEGNVSIYSSDQDAINRAKEII). In terms of domain architecture, S1 motif spans 625–693 (DEVYRAKVVR…EKGRIDASMK (69 aa)). The interval 691-737 (SMKALLPRPPKPEHDEKGEKSERPHRPRHQKDHKPKKEFTETPKDSE) is disordered. A compositionally biased stretch (basic and acidic residues) spans 700–714 (PKPEHDEKGEKSERP). The segment covering 715 to 724 (HRPRHQKDHK) has biased composition (basic residues). Residues 725 to 737 (PKKEFTETPKDSE) show a composition bias toward basic and acidic residues.

It belongs to the polyribonucleotide nucleotidyltransferase family. The cofactor is Mg(2+).

The protein resides in the cytoplasm. It carries out the reaction RNA(n+1) + phosphate = RNA(n) + a ribonucleoside 5'-diphosphate. Functionally, involved in mRNA degradation. Catalyzes the phosphorolysis of single-stranded polyribonucleotides processively in the 3'- to 5'-direction. This is Polyribonucleotide nucleotidyltransferase from Streptococcus pneumoniae (strain JJA).